The chain runs to 442 residues: tRNA-2-methylthio-N(6)-dimethylallyladenosine synthase (442 aa).

Residues 3-120 (NKLYIRTFGC…LPNMLNDALN (118 aa)) form the MTTase N-terminal domain. [4Fe-4S] cluster is bound by residues C12, C49, C83, C157, C161, and C164. The Radical SAM core domain maps to 143 to 375 (RTNSVTAFVS…QKTINNNTEH (233 aa)). One can recognise a TRAM domain in the interval 378–440 (QLMIGSIQKV…GNSLMGDLLT (63 aa)).

The protein belongs to the methylthiotransferase family. MiaB subfamily. Monomer. [4Fe-4S] cluster is required as a cofactor.

The protein resides in the cytoplasm. It carries out the reaction N(6)-dimethylallyladenosine(37) in tRNA + (sulfur carrier)-SH + AH2 + 2 S-adenosyl-L-methionine = 2-methylsulfanyl-N(6)-dimethylallyladenosine(37) in tRNA + (sulfur carrier)-H + 5'-deoxyadenosine + L-methionine + A + S-adenosyl-L-homocysteine + 2 H(+). Catalyzes the methylthiolation of N6-(dimethylallyl)adenosine (i(6)A), leading to the formation of 2-methylthio-N6-(dimethylallyl)adenosine (ms(2)i(6)A) at position 37 in tRNAs that read codons beginning with uridine. The polypeptide is tRNA-2-methylthio-N(6)-dimethylallyladenosine synthase (Vesicomyosocius okutanii subsp. Calyptogena okutanii (strain HA)).